A 203-amino-acid polypeptide reads, in one-letter code: Calcineurin B-like protein 5 (203 aa).

A lipid anchor (N-myristoyl glycine) is attached at Gly2. 4 EF-hand domains span residues 30–65 (EVEV…KNTK), 66–101 (KRSL…FHPN), 103–138 (SPRD…VLEE), and 147–182 (IIDS…YPLT).

It belongs to the calcineurin regulatory subunit family. In terms of assembly, homodimer. Interacts with PP2CA, CIPK2, CIPK11, CIPK23 and CIPK24. Post-translationally, both N-myristoylation and calcium-mediated conformational changes are essential for its function. Expressed in green tissues, but not in the roots.

The protein localises to the cytoplasm. It localises to the nucleus. Acts as a calcium sensor. CBL proteins interact with CIPK serine-threonine protein kinases. Binding of a CBL protein to the regulatory NAF domain of a CIPK protein lead to the activation of the kinase in a calcium-dependent manner. May function as a positive regulator of salt or drought responses. This chain is Calcineurin B-like protein 5 (CBL5), found in Arabidopsis thaliana (Mouse-ear cress).